The primary structure comprises 474 residues: Catalase (474 aa).

Residues His-52 and Asn-124 contribute to the active site. Residue Tyr-334 participates in heme binding.

Belongs to the catalase family. Heme serves as cofactor.

It catalyses the reaction 2 H2O2 = O2 + 2 H2O. Functionally, decomposes hydrogen peroxide into water and oxygen; serves to protect cells from the toxic effects of hydrogen peroxide. The protein is Catalase (katA) of Campylobacter jejuni subsp. jejuni serotype O:2 (strain ATCC 700819 / NCTC 11168).